Reading from the N-terminus, the 250-residue chain is 3-deoxy-manno-octulosonate cytidylyltransferase (250 aa).

The protein belongs to the KdsB family.

The protein localises to the cytoplasm. The catalysed reaction is 3-deoxy-alpha-D-manno-oct-2-ulosonate + CTP = CMP-3-deoxy-beta-D-manno-octulosonate + diphosphate. The protein operates within nucleotide-sugar biosynthesis; CMP-3-deoxy-D-manno-octulosonate biosynthesis; CMP-3-deoxy-D-manno-octulosonate from 3-deoxy-D-manno-octulosonate and CTP: step 1/1. It participates in bacterial outer membrane biogenesis; lipopolysaccharide biosynthesis. Its function is as follows. Activates KDO (a required 8-carbon sugar) for incorporation into bacterial lipopolysaccharide in Gram-negative bacteria. The protein is 3-deoxy-manno-octulosonate cytidylyltransferase of Syntrophobacter fumaroxidans (strain DSM 10017 / MPOB).